Here is a 336-residue protein sequence, read N- to C-terminus: 3-isopropylmalate dehydrogenase (336 aa).

Residues arginine 87, arginine 97, arginine 121, and aspartate 211 each coordinate substrate. Mg(2+) contacts are provided by aspartate 211, aspartate 235, and aspartate 239. 271-283 (GSAPDIAGQGIAD) is an NAD(+) binding site.

Belongs to the isocitrate and isopropylmalate dehydrogenases family. LeuB type 2 subfamily. In terms of assembly, homodimer. Mg(2+) is required as a cofactor. Requires Mn(2+) as cofactor.

It localises to the cytoplasm. It catalyses the reaction (2R,3S)-3-isopropylmalate + NAD(+) = 4-methyl-2-oxopentanoate + CO2 + NADH. The protein operates within amino-acid biosynthesis; L-leucine biosynthesis; L-leucine from 3-methyl-2-oxobutanoate: step 3/4. In terms of biological role, catalyzes the oxidation of 3-carboxy-2-hydroxy-4-methylpentanoate (3-isopropylmalate) to 3-carboxy-4-methyl-2-oxopentanoate. The product decarboxylates to 4-methyl-2 oxopentanoate. This Mycobacterium tuberculosis (strain CDC 1551 / Oshkosh) protein is 3-isopropylmalate dehydrogenase (leuB).